Reading from the N-terminus, the 205-residue chain is Protein N-terminal glutamine amidohydrolase (205 aa).

Residues Cys-20, His-74, and Asp-90 contribute to the active site.

Belongs to the NTAQ1 family. Monomer.

It carries out the reaction N-terminal L-glutaminyl-[protein] + H2O = N-terminal L-glutamyl-[protein] + NH4(+). Mediates the side-chain deamidation of N-terminal glutamine residues to glutamate, an important step in N-end rule pathway of protein degradation. Conversion of the resulting N-terminal glutamine to glutamate renders the protein susceptible to arginylation, polyubiquitination and degradation as specified by the N-end rule. Does not act on substrates with internal or C-terminal glutamine and does not act on non-glutamine residues in any position. The chain is Protein N-terminal glutamine amidohydrolase (tun) from Drosophila melanogaster (Fruit fly).